The following is a 360-amino-acid chain: Lipid-A-disaccharide synthase (360 aa).

The protein belongs to the LpxB family.

It catalyses the reaction a lipid X + a UDP-2-N,3-O-bis[(3R)-3-hydroxyacyl]-alpha-D-glucosamine = a lipid A disaccharide + UDP + H(+). It functions in the pathway bacterial outer membrane biogenesis; LPS lipid A biosynthesis. Functionally, condensation of UDP-2,3-diacylglucosamine and 2,3-diacylglucosamine-1-phosphate to form lipid A disaccharide, a precursor of lipid A, a phosphorylated glycolipid that anchors the lipopolysaccharide to the outer membrane of the cell. This is Lipid-A-disaccharide synthase from Helicobacter pylori (strain HPAG1).